The chain runs to 962 residues: Translation initiation factor IF-2 (962 aa).

Residues 52-77 show a composition bias toward basic and acidic residues; sequence RSHGQADDSSRKKITLTKRETSEIRQ. Disordered stretches follow at residues 52–87 and 121–378; these read RSHG…TRTV and AVEE…EPVV. Residues 78-87 show a composition bias toward polar residues; it reads SDGTGKTRTV. Composition is skewed to basic and acidic residues over residues 123–183, 197–250, and 267–278; these read EEAR…KAEE, DSSR…EAEA, and PSERKAEEKKAE. Residues 342–355 are compositionally biased toward gly residues; it reads TSGGVGGWRGGPRG. The tr-type G domain maps to 462-631; the sequence is PRPPVVTVMG…LLQAEVLELT (170 aa). The segment at 471-478 is G1; that stretch reads GHVDHGKT. Residue 471 to 478 participates in GTP binding; that stretch reads GHVDHGKT. The G2 stretch occupies residues 496–500; it reads GITQH. The tract at residues 517–520 is G3; it reads DTPG. GTP is bound by residues 517 to 521 and 571 to 574; these read DTPGH and NKID. Residues 571–574 form a G4 region; that stretch reads NKID. The interval 607-609 is G5; it reads SAK.

This sequence belongs to the TRAFAC class translation factor GTPase superfamily. Classic translation factor GTPase family. IF-2 subfamily.

The protein localises to the cytoplasm. One of the essential components for the initiation of protein synthesis. Protects formylmethionyl-tRNA from spontaneous hydrolysis and promotes its binding to the 30S ribosomal subunits. Also involved in the hydrolysis of GTP during the formation of the 70S ribosomal complex. The polypeptide is Translation initiation factor IF-2 (Cupriavidus necator (strain ATCC 17699 / DSM 428 / KCTC 22496 / NCIMB 10442 / H16 / Stanier 337) (Ralstonia eutropha)).